A 311-amino-acid chain; its full sequence is tRNA-cytidine(32) 2-sulfurtransferase (311 aa).

The segment at 18–38 is disordered; sequence KVGADHGPSEENGSSHPLFDN. The PP-loop motif signature appears at 77–82; that stretch reads SGGKDS. Positions 152, 155, and 243 each coordinate [4Fe-4S] cluster.

This sequence belongs to the TtcA family. Homodimer. It depends on Mg(2+) as a cofactor. The cofactor is [4Fe-4S] cluster.

It is found in the cytoplasm. It catalyses the reaction cytidine(32) in tRNA + S-sulfanyl-L-cysteinyl-[cysteine desulfurase] + AH2 + ATP = 2-thiocytidine(32) in tRNA + L-cysteinyl-[cysteine desulfurase] + A + AMP + diphosphate + H(+). The protein operates within tRNA modification. Functionally, catalyzes the ATP-dependent 2-thiolation of cytidine in position 32 of tRNA, to form 2-thiocytidine (s(2)C32). The sulfur atoms are provided by the cysteine/cysteine desulfurase (IscS) system. This Agrobacterium fabrum (strain C58 / ATCC 33970) (Agrobacterium tumefaciens (strain C58)) protein is tRNA-cytidine(32) 2-sulfurtransferase.